A 339-amino-acid polypeptide reads, in one-letter code: Phenylalanine--tRNA ligase alpha subunit (339 aa).

Mg(2+) is bound at residue glutamate 254.

Belongs to the class-II aminoacyl-tRNA synthetase family. Phe-tRNA synthetase alpha subunit type 1 subfamily. In terms of assembly, tetramer of two alpha and two beta subunits. It depends on Mg(2+) as a cofactor.

It localises to the cytoplasm. The enzyme catalyses tRNA(Phe) + L-phenylalanine + ATP = L-phenylalanyl-tRNA(Phe) + AMP + diphosphate + H(+). In Dictyoglomus turgidum (strain DSM 6724 / Z-1310), this protein is Phenylalanine--tRNA ligase alpha subunit.